Here is a 327-residue protein sequence, read N- to C-terminus: Lipoyl synthase (327 aa).

Residues cysteine 72, cysteine 77, cysteine 83, cysteine 98, cysteine 102, cysteine 105, and serine 313 each contribute to the [4Fe-4S] cluster site. One can recognise a Radical SAM core domain in the interval 83–302; that stretch reads CWSHGTATIM…RKVGLEKGFL (220 aa).

This sequence belongs to the radical SAM superfamily. Lipoyl synthase family. The cofactor is [4Fe-4S] cluster.

The protein localises to the cytoplasm. It catalyses the reaction [[Fe-S] cluster scaffold protein carrying a second [4Fe-4S](2+) cluster] + N(6)-octanoyl-L-lysyl-[protein] + 2 oxidized [2Fe-2S]-[ferredoxin] + 2 S-adenosyl-L-methionine + 4 H(+) = [[Fe-S] cluster scaffold protein] + N(6)-[(R)-dihydrolipoyl]-L-lysyl-[protein] + 4 Fe(3+) + 2 hydrogen sulfide + 2 5'-deoxyadenosine + 2 L-methionine + 2 reduced [2Fe-2S]-[ferredoxin]. It participates in protein modification; protein lipoylation via endogenous pathway; protein N(6)-(lipoyl)lysine from octanoyl-[acyl-carrier-protein]: step 2/2. In terms of biological role, catalyzes the radical-mediated insertion of two sulfur atoms into the C-6 and C-8 positions of the octanoyl moiety bound to the lipoyl domains of lipoate-dependent enzymes, thereby converting the octanoylated domains into lipoylated derivatives. The chain is Lipoyl synthase from Francisella tularensis subsp. novicida (strain U112).